A 321-amino-acid polypeptide reads, in one-letter code: uncharacterized protein (321 aa).

Transmembrane regions (helical) follow at residues 6–26 (LFIG…MFPV), 37–57 (FYFS…LLLV), 72–92 (WIIL…FLGQ), 100–120 (IMTA…ILWG), 134–154 (ILIA…SFFF), 160–180 (LFSI…TMGG), 196–216 (CLFG…QGYV), 223–243 (VIAA…IIAL), 255–275 (SING…IMVI), and 277–297 (GYNI…GLIL). 2 EamA domains span residues 18-146 (MSWG…MVIT) and 175-300 (VYTM…LNNI).

The protein belongs to the EamA transporter family.

The protein resides in the cell membrane. This is an uncharacterized protein from Bacillus subtilis (strain 168).